Consider the following 130-residue polypeptide: uncharacterized protein (130 aa).

The segment at 23 to 130 is disordered; that stretch reads SHLRLLPTAN…GAHQLSSPSS (108 aa). Positions 30–45 are enriched in polar residues; that stretch reads TANSPSGSNQPTNPNR.

This is an uncharacterized protein from Homo sapiens (Human).